A 218-amino-acid polypeptide reads, in one-letter code: Transmembrane gamma-carboxyglutamic acid protein 1 (218 aa).

Residues 1-20 (MGRVFLTGEKANSVLKRYPR) constitute a propeptide that is removed on maturation. The Gla domain maps to 20–66 (RANGFFEEIRQGNIERECKEEFCTFEEAREAFENNEKTKEFWSTYTK). The Extracellular portion of the chain corresponds to 21-80 (ANGFFEEIRQGNIERECKEEFCTFEEAREAFENNEKTKEFWSTYTKAQQGESNRGSDWFQ). Cysteines 37 and 42 form a disulfide. The helical transmembrane segment at 81-101 (FYLTFPLIFGLFIILLVIFLI) threads the bilayer. Residues 102 to 218 (WRCFLRNKTR…PMVPVVTTIK (117 aa)) are Cytoplasmic-facing. The segment at 161–195 (TRLSNCDPPPTYEEATGQVNLQRSETEPHLDPPPE) is disordered.

Post-translationally, gla residues are produced after subsequent post-translational modifications of glutamate by a vitamin K-dependent gamma-carboxylase.

The protein localises to the membrane. The protein is Transmembrane gamma-carboxyglutamic acid protein 1 (PRRG1) of Pongo abelii (Sumatran orangutan).